The primary structure comprises 448 residues: Phosphoglucosamine mutase (448 aa).

Ser101 acts as the Phosphoserine intermediate in catalysis. 4 residues coordinate Mg(2+): Ser101, Asp242, Asp244, and Asp246. Ser101 is modified (phosphoserine).

Belongs to the phosphohexose mutase family. It depends on Mg(2+) as a cofactor. In terms of processing, activated by phosphorylation.

The enzyme catalyses alpha-D-glucosamine 1-phosphate = D-glucosamine 6-phosphate. Catalyzes the conversion of glucosamine-6-phosphate to glucosamine-1-phosphate. The sequence is that of Phosphoglucosamine mutase from Afipia carboxidovorans (strain ATCC 49405 / DSM 1227 / KCTC 32145 / OM5) (Oligotropha carboxidovorans).